Here is a 1985-residue protein sequence, read N- to C-terminus: Non-reducing polyketide synthase ntnG (1985 aa).

The segment at L7–H243 is N-terminal acylcarrier protein transacylase (SAT) domain. A Ketosynthase family 3 (KS3) domain is found at S364–E792. Residues C536, H671, and H711 each act as for beta-ketoacyl synthase activity in the active site. The segment at V889–C1148 is malonyl-CoA:ACP transacylase (MAT) domain. S980 (for acyl/malonyl transferase activity) is an active-site residue. The tract at residues H1261–D1392 is N-terminal hotdog fold. One can recognise a PKS/mFAS DH domain in the interval H1261–H1567. Residues K1265–L1566 form a product template (PT) domain region. The Proton acceptor; for dehydratase activity role is filled by H1293. The interval A1414–H1567 is C-terminal hotdog fold. D1479 serves as the catalytic Proton donor; for dehydratase activity. Over residues N1578–P1605 the composition is skewed to polar residues. Residues N1578 to S1622 are disordered. The Carrier domain maps to S1622–E1699. S1659 is modified (O-(pantetheine 4'-phosphoryl)serine). A thioesterase (TE) domain region spans residues T1719–K1913.

It functions in the pathway secondary metabolite biosynthesis; terpenoid biosynthesis. In terms of biological role, non-reducing polyketide synthase; part of the gene cluster that mediates the biosynthesis of the meroterpenoids nectripenoids A and B, as well as cochliquninone D and isocochliquninone E. The pathway probably begins with the HR-PKS ntnH that catalyzes two chain-extension steps to form a reduced triketide, which then primes the SAT domain in the NR-PKS ntnG to initiate three more cycles of extension to give a linear hexaketide corresponding to the polyketide part of nectripenoids. The FAD-dependent monooxygenase ntnJ then performs an oxidative decarboxylation at C11 of the ntnH/ntnG product, via an electrophilic aromatic hydroxylation with concomitant ipso-decarboxylation. The membrane-bound polyprenyl transferase ntnF then introduces a farnesyl group before the FAD-dependent monooxygenase ntnK functions as the first epoxidase on terminal C12'-C13' olefin, followed by a second epoxidation on C7'-C8' catalyzed by ntnA. The terpene cyclase/mutase ntnI then initiates the sequential tricyclic ring formation through protonation of the terminal epoxide and catalyzes the regioselective and stereoselective 6/6/6-tricyclic ring formation. The cytochrome P450 monooxygenase ntnM may then hydroxylate C1'. The protein is Non-reducing polyketide synthase ntnG of Nectria sp.